Here is a 235-residue protein sequence, read N- to C-terminus: Uridylate kinase (235 aa).

8–11 provides a ligand contact to ATP; the sequence is KFSG. Residues 16–21 are involved in allosteric activation by GTP; the sequence is GKEGYG. G50 is a UMP binding site. 2 residues coordinate ATP: G51 and R55. UMP is bound by residues D71 and 132–139; that span reads TGNPYFTT. ATP contacts are provided by T159, Y165, and D168.

It belongs to the UMP kinase family. As to quaternary structure, homohexamer.

It localises to the cytoplasm. It carries out the reaction UMP + ATP = UDP + ADP. Its pathway is pyrimidine metabolism; CTP biosynthesis via de novo pathway; UDP from UMP (UMPK route): step 1/1. Allosterically activated by GTP. Inhibited by UTP. In terms of biological role, catalyzes the reversible phosphorylation of UMP to UDP. The protein is Uridylate kinase of Sulfurovum sp. (strain NBC37-1).